Consider the following 458-residue polypeptide: tRNA modification GTPase MnmE (458 aa).

Residues R23, E80, and K122 each coordinate (6S)-5-formyl-5,6,7,8-tetrahydrofolate. The 163-residue stretch at 218–380 (GMKIVIAGRP…LREHLQQTMG (163 aa)) folds into the TrmE-type G domain. N228 contacts K(+). Residues 228–233 (NVGKSS), 247–253 (TQIPGTT), 272–275 (DTAG), and 361–363 (SAR) contribute to the GTP site. Residue S232 participates in Mg(2+) binding. K(+)-binding residues include T247, I249, and T252. T253 is a binding site for Mg(2+). K458 lines the (6S)-5-formyl-5,6,7,8-tetrahydrofolate pocket.

It belongs to the TRAFAC class TrmE-Era-EngA-EngB-Septin-like GTPase superfamily. TrmE GTPase family. As to quaternary structure, homodimer. Heterotetramer of two MnmE and two MnmG subunits. The cofactor is K(+).

The protein localises to the cytoplasm. Functionally, exhibits a very high intrinsic GTPase hydrolysis rate. Involved in the addition of a carboxymethylaminomethyl (cmnm) group at the wobble position (U34) of certain tRNAs, forming tRNA-cmnm(5)s(2)U34. In Hamiltonella defensa subsp. Acyrthosiphon pisum (strain 5AT), this protein is tRNA modification GTPase MnmE.